Reading from the N-terminus, the 635-residue chain is Threonine--tRNA ligase (635 aa).

Positions 1 to 61 constitute a TGS domain; the sequence is MTVVRLPDGT…ETDSDLVLIT (61 aa). Residues 242-533 form a catalytic region; it reads DHRKLGKQLD…LIEHHAGALP (292 aa). Residues C333, H384, and H510 each coordinate Zn(2+).

This sequence belongs to the class-II aminoacyl-tRNA synthetase family. Homodimer. The cofactor is Zn(2+).

It localises to the cytoplasm. The catalysed reaction is tRNA(Thr) + L-threonine + ATP = L-threonyl-tRNA(Thr) + AMP + diphosphate + H(+). Functionally, catalyzes the attachment of threonine to tRNA(Thr) in a two-step reaction: L-threonine is first activated by ATP to form Thr-AMP and then transferred to the acceptor end of tRNA(Thr). Also edits incorrectly charged L-seryl-tRNA(Thr). The chain is Threonine--tRNA ligase from Nitrosomonas europaea (strain ATCC 19718 / CIP 103999 / KCTC 2705 / NBRC 14298).